Reading from the N-terminus, the 108-residue chain is UPF0145 protein SYNPCC7002_A1337 (108 aa).

Belongs to the UPF0145 family.

The sequence is that of UPF0145 protein SYNPCC7002_A1337 from Picosynechococcus sp. (strain ATCC 27264 / PCC 7002 / PR-6) (Agmenellum quadruplicatum).